An 80-amino-acid chain; its full sequence is uncharacterized protein (80 aa).

To M.leprae U650M.

This is an uncharacterized protein from Mycobacterium bovis (strain ATCC BAA-935 / AF2122/97).